A 29-amino-acid chain; its full sequence is ShK homolog Ask132958 (29 aa).

Positions 1 to 29 (CENTISGCSRADCLLTHRKQGCQKTCGLC) constitute a ShKT domain. Disulfide bonds link C1-C29, C8-C22, and C13-C26.

The protein belongs to the sea anemone type 1 potassium channel toxin family. Type 1a subfamily.

The protein localises to the secreted. Its subcellular location is the nematocyst. In terms of biological role, this peptide is similar to the potassium channel toxin ShK, but does not show activity on potassium channels. It appears that Lys-19, which is expected to occupy the pore of the channel, is not sufficiently accessible for binding, and therefore that this peptide must have a distinct functional role that does not involve potassium channels. It is noteworthy that this peptide is much more stable in the presence of trypsin, chymotrypsin and pepsin than the toxin ShK. The chain is ShK homolog Ask132958 from Anemonia sulcata (Mediterranean snakelocks sea anemone).